A 3329-amino-acid polypeptide reads, in one-letter code: Breast cancer type 2 susceptibility protein homolog (3329 aa).

The interval 1–40 (MPVEYKRRPTFWEIFKARCSTADLGPISLNWFEELSSEAP) is interaction with PALB2. Disordered stretches follow at residues 37–69 (SEAP…QRNP) and 207–241 (EARS…SVPS). Phosphoserine occurs at positions 435 and 481. Residues 628 to 650 (PDSSDKKRCLPNDPEEPSLTNSF) are disordered. Positions 628–979 (PDSSDKKRCL…DKWSEFLDPV (352 aa)) are interaction with NPM1. S735 bears the Phosphoserine mark. The span at 934–953 (EKSRNNIEQHQKGTEDKDFK) shows a compositional bias: basic and acidic residues. A disordered region spans residues 934–965 (EKSRNNIEQHQKGTEDKDFKSNSSLNMKSDGN). Residues 954-965 (SNSSLNMKSDGN) show a composition bias toward polar residues. 2 BRCA2 repeats span residues 981–1015 (NHNF…DIEE) and 1192–1226 (NEME…DIEN). The segment at 982-2035 (HNFGGSFRTA…LHKVKGMLEE (1054 aa)) is interaction with RAD51. Residues 1296 to 1340 (NTKHEDSYTSSQRNNLENSDGSMSSTSGPVYIHKGDSDLPADQGS) form a disordered region. Over residues 1303 to 1323 (YTSSQRNNLENSDGSMSSTSG) the composition is skewed to polar residues. 5 BRCA2 repeats span residues 1394–1428 (IKEF…RETD), 1491–1525 (KEPT…ETQY), 1623–1657 (TEDS…EQGD), 1924–1958 (PSRT…EMDG), and 2004–2038 (NSSV…EFDL). S2048 bears the Phosphoserine mark. A disordered region spans residues 2073 to 2099 (NSKLQKTYNDKSSLPSNYKESGSSGNT). A compositionally biased stretch (polar residues) spans 2074 to 2099 (SKLQKTYNDKSSLPSNYKESGSSGNT). Positions 2219-2285 (KRGGVTVDAV…EPVTCGPFCS (67 aa)) are interaction with HSF2BP. The interaction with FANCD2 stretch occupies residues 2298-2466 (TSPAQELLSK…SPKQLYIYGV (169 aa)). Positions 2361-2393 (FHGDEHFNSKNVNLEGKNQKSTDGDREDGNDSH) are disordered. Over residues 2377-2393 (KNQKSTDGDREDGNDSH) the composition is skewed to basic and acidic residues. Residues 2402-2753 (MSSLQSARDL…QRVYPLQWVE (352 aa)) form an interaction with SEM1 region. The Nuclear export signal; masked by interaction with SEM1 signature appears at 2603–2619 (AAKTLVLCISDIISPST). S3214 carries the post-translational modification Phosphoserine; by CDK1 and CDK2. 2 disordered regions span residues 3221-3257 (FQPP…VSLP) and 3273-3329 (QALT…AVES). Residue S3241 is modified to Phosphoserine. The segment covering 3309 to 3329 (SRKESLRDCRGDSSEKLAVES) has biased composition (basic and acidic residues).

As to quaternary structure, monomer and dimer. Interacts with RAD51; regulates RAD51 recruitment and function at sites of DNA repair. Interacts with SEM1, WDR16, USP11, DMC1, ROCK2 and NPM1. Interacts with both nonubiquitinated and monoubiquitinated FANCD2; this complex also includes XRCC3 and phosphorylated FANCG. Part of a BRCA complex containing BRCA1, BRCA2 and PALB2. Component of the homologous recombination repair (HR) complex composed of ERCC5/XPG, BRCA2, PALB2, DSS1 and RAD51. Within the complex, interacts with ERCC5/XPG and PALB2. Interacts directly with PALB2 which may serve as a scaffold for a HR complex containing PALB2, BRCA2, RAD51C, RAD51 and XRCC3. Interacts with BRCA1 only in the presence of PALB2 which serves as the bridging protein. Interacts with POLH; the interaction is direct. Interacts with the TREX-2 complex subunits PCID2 and SEM1. Interacts with HSF2BP and BRME1; the interaction with HSF2BP is direct and allows the formation of a ternary complex. The complex BRME1:HSF2BP:BRCA2 interacts with SPATA22, MEIOB and RAD51. Post-translationally, phosphorylated by ATM upon irradiation-induced DNA damage. Phosphorylation by CHEK1 and CHEK2 regulates interaction with RAD51. Phosphorylation at Ser-3291 by CDK1 and CDK2 is low in S phase when recombination is active, but increases as cells progress towards mitosis; this phosphorylation prevents homologous recombination-dependent repair during S phase and G2 by inhibiting RAD51 binding. Ubiquitinated in the absence of DNA damage; this does not lead to proteasomal degradation. In contrast, ubiquitination in response to DNA damage leads to proteasomal degradation. In terms of tissue distribution, widely expressed. Highest expression in cerebellum, testis, ileum, appendix, epididymis, ovary and mammary gland. No expression in lung.

The protein localises to the nucleus. It is found in the cytoplasm. The protein resides in the cytoskeleton. It localises to the microtubule organizing center. Its subcellular location is the centrosome. Involved in double-strand break repair and/or homologous recombination. Binds RAD51 and potentiates recombinational DNA repair by promoting assembly of RAD51 onto single-stranded DNA (ssDNA). Acts by targeting RAD51 to ssDNA over double-stranded DNA, enabling RAD51 to displace replication protein-A (RPA) from ssDNA and stabilizing RAD51-ssDNA filaments by blocking ATP hydrolysis. Part of a PALB2-scaffolded HR complex containing RAD51C and which is thought to play a role in DNA repair by HR. May participate in S phase checkpoint activation. Binds selectively to ssDNA, and to ssDNA in tailed duplexes and replication fork structures. May play a role in the extension step after strand invasion at replication-dependent DNA double-strand breaks; together with PALB2 is involved in both POLH localization at collapsed replication forks and DNA polymerization activity. In concert with NPM1, regulates centrosome duplication. Interacts with the TREX-2 complex (transcription and export complex 2) subunits PCID2 and SEM1, and is required to prevent R-loop-associated DNA damage and thus transcription-associated genomic instability, independently of its known role in homologous recombination. In Mus musculus (Mouse), this protein is Breast cancer type 2 susceptibility protein homolog.